Here is a 198-residue protein sequence, read N- to C-terminus: Ribonuclease HII (198 aa).

One can recognise an RNase H type-2 domain in the interval 3 to 198; that stretch reads FLEGGVDEAG…SWRTLRGESP (196 aa). The a divalent metal cation site is built by D9, E10, and D104.

This sequence belongs to the RNase HII family. Mn(2+) is required as a cofactor. It depends on Mg(2+) as a cofactor.

The protein resides in the cytoplasm. It catalyses the reaction Endonucleolytic cleavage to 5'-phosphomonoester.. Endonuclease that specifically degrades the RNA of RNA-DNA hybrids. The polypeptide is Ribonuclease HII (Pyrobaculum neutrophilum (strain DSM 2338 / JCM 9278 / NBRC 100436 / V24Sta) (Thermoproteus neutrophilus)).